A 320-amino-acid polypeptide reads, in one-letter code: Ferrochelatase (320 aa).

Fe cation-binding residues include histidine 194 and glutamate 275.

This sequence belongs to the ferrochelatase family.

It is found in the cytoplasm. It carries out the reaction heme b + 2 H(+) = protoporphyrin IX + Fe(2+). Its pathway is porphyrin-containing compound metabolism; protoheme biosynthesis; protoheme from protoporphyrin-IX: step 1/1. In terms of biological role, catalyzes the ferrous insertion into protoporphyrin IX. The sequence is that of Ferrochelatase from Vibrio atlanticus (strain LGP32) (Vibrio splendidus (strain Mel32)).